Reading from the N-terminus, the 249-residue chain is Enolase-phosphatase E1 (249 aa).

This sequence belongs to the HAD-like hydrolase superfamily. MasA/MtnC family. Monomer. Mg(2+) is required as a cofactor.

The catalysed reaction is 5-methylsulfanyl-2,3-dioxopentyl phosphate + H2O = 1,2-dihydroxy-5-(methylsulfanyl)pent-1-en-3-one + phosphate. It participates in amino-acid biosynthesis; L-methionine biosynthesis via salvage pathway; L-methionine from S-methyl-5-thio-alpha-D-ribose 1-phosphate: step 3/6. It functions in the pathway amino-acid biosynthesis; L-methionine biosynthesis via salvage pathway; L-methionine from S-methyl-5-thio-alpha-D-ribose 1-phosphate: step 4/6. Its function is as follows. Bifunctional enzyme that catalyzes the enolization of 2,3-diketo-5-methylthiopentyl-1-phosphate (DK-MTP-1-P) into the intermediate 2-hydroxy-3-keto-5-methylthiopentenyl-1-phosphate (HK-MTPenyl-1-P), which is then dephosphorylated to form the acireductone 1,2-dihydroxy-3-keto-5-methylthiopentene (DHK-MTPene). In Synechococcus sp. (strain CC9605), this protein is Enolase-phosphatase E1.